A 176-amino-acid polypeptide reads, in one-letter code: COA8 family protein CG14806, mitochondrial (176 aa).

The N-terminal 23 residues, 1-23 (MNKCFRCQPRISLFQFSLPRCYA), are a transit peptide targeting the mitochondrion.

This sequence belongs to the COA8 family.

The protein resides in the mitochondrion inner membrane. Its function is as follows. May be required for cytochrome c complex (COX) assembly and function, COX being the terminal component of the mitochondrial respiratory chain. In terms of biological role, (Microbial infection) Required for optimal replication of E.chaffeensis. The polypeptide is COA8 family protein CG14806, mitochondrial (Drosophila melanogaster (Fruit fly)).